The following is a 174-amino-acid chain: Chorismate pyruvate-lyase (174 aa).

Positions 36, 78, 116, and 157 each coordinate substrate.

It belongs to the UbiC family. In terms of assembly, monomer.

It localises to the cytoplasm. It carries out the reaction chorismate = 4-hydroxybenzoate + pyruvate. Its pathway is cofactor biosynthesis; ubiquinone biosynthesis. Its function is as follows. Removes the pyruvyl group from chorismate, with concomitant aromatization of the ring, to provide 4-hydroxybenzoate (4HB) for the ubiquinone pathway. The protein is Chorismate pyruvate-lyase of Erwinia tasmaniensis (strain DSM 17950 / CFBP 7177 / CIP 109463 / NCPPB 4357 / Et1/99).